We begin with the raw amino-acid sequence, 221 residues long: Iron-sulfur cluster repair protein YtfE (221 aa).

The protein belongs to the RIC family. YtfE subfamily. In terms of assembly, homodimer.

The protein resides in the cytoplasm. Functionally, di-iron-containing protein involved in the repair of iron-sulfur clusters damaged by oxidative and nitrosative stress conditions. This is Iron-sulfur cluster repair protein YtfE from Cronobacter sakazakii (strain ATCC BAA-894) (Enterobacter sakazakii).